Reading from the N-terminus, the 197-residue chain is Putative double homeobox protein 3 (197 aa).

DNA-binding regions (homeobox) lie at residues 46 to 105 and 121 to 180; these read GRRM…LRQH and GRRK…WGQS. Residues 102 to 127 are disordered; the sequence is LRQHRRQSRPWPGRRDPQKGRRKRTA.

Belongs to the paired homeobox family. As to expression, expressed in hepatoma Hep3B cells.

It is found in the nucleus. The sequence is that of Putative double homeobox protein 3 (DUX3) from Homo sapiens (Human).